The sequence spans 342 residues: Anthranilate phosphoribosyltransferase (342 aa).

Residues G80, 83–84 (GD), T88, 90–93 (NIST), 108–116 (KHGNRAVSS), and S120 each bind 5-phospho-alpha-D-ribose 1-diphosphate. An anthranilate-binding site is contributed by G80. Residue S92 participates in Mg(2+) binding. Position 111 (N111) interacts with anthranilate. An anthranilate-binding site is contributed by R166. 2 residues coordinate Mg(2+): D225 and E226.

Belongs to the anthranilate phosphoribosyltransferase family. Homodimer. The cofactor is Mg(2+).

The catalysed reaction is N-(5-phospho-beta-D-ribosyl)anthranilate + diphosphate = 5-phospho-alpha-D-ribose 1-diphosphate + anthranilate. It participates in amino-acid biosynthesis; L-tryptophan biosynthesis; L-tryptophan from chorismate: step 2/5. Catalyzes the transfer of the phosphoribosyl group of 5-phosphorylribose-1-pyrophosphate (PRPP) to anthranilate to yield N-(5'-phosphoribosyl)-anthranilate (PRA). In Halalkalibacterium halodurans (strain ATCC BAA-125 / DSM 18197 / FERM 7344 / JCM 9153 / C-125) (Bacillus halodurans), this protein is Anthranilate phosphoribosyltransferase.